Here is a 219-residue protein sequence, read N- to C-terminus: Ran-specific GTPase-activating protein 1 (219 aa).

3 stretches are compositionally biased toward basic and acidic residues: residues 1–12, 33–45, and 57–72; these read MAEVERKEEQAK, AVGD…EAKK, and PRKD…DNID. Residues 1-72 are disordered; sequence MAEVERKEEQ…KGGEERDNID (72 aa). The RanBD1 domain maps to 70 to 210; it reads NIDAAEVVEK…YDLGRAHNEK (141 aa).

This sequence belongs to the RANBP1 family.

The protein localises to the cytoplasm. It localises to the nucleus. Functionally, important for the export of protein containing nuclear export signal (NES) out of the nucleus. The sequence is that of Ran-specific GTPase-activating protein 1 (YRB1) from Encephalitozoon cuniculi (strain GB-M1) (Microsporidian parasite).